The following is a 347-amino-acid chain: S-adenosylmethionine:tRNA ribosyltransferase-isomerase (347 aa).

This sequence belongs to the QueA family. Monomer.

Its subcellular location is the cytoplasm. The enzyme catalyses 7-aminomethyl-7-carbaguanosine(34) in tRNA + S-adenosyl-L-methionine = epoxyqueuosine(34) in tRNA + adenine + L-methionine + 2 H(+). It functions in the pathway tRNA modification; tRNA-queuosine biosynthesis. In terms of biological role, transfers and isomerizes the ribose moiety from AdoMet to the 7-aminomethyl group of 7-deazaguanine (preQ1-tRNA) to give epoxyqueuosine (oQ-tRNA). The protein is S-adenosylmethionine:tRNA ribosyltransferase-isomerase of Exiguobacterium sibiricum (strain DSM 17290 / CCUG 55495 / CIP 109462 / JCM 13490 / 255-15).